A 534-amino-acid polypeptide reads, in one-letter code: tRNA uridine(34) acetyltransferase (534 aa).

The interval 70–330 (KPVRTISGVA…GEFKPYREEE (261 aa)) is radical S-adenosyl-L-methionine (rSAM). Residues 73 to 344 (RTISGVAVVA…ISYAKSIMPK (272 aa)) form the Radical SAM core domain. [4Fe-4S] cluster contacts are provided by cysteine 90, cysteine 95, and cysteine 98. Lysine 150 contacts acetyl-CoA. Cysteine 384 and cysteine 389 are joined by a disulfide. Positions 387 to 534 (IRCREVGHVY…RVGAYMGKEL (148 aa)) constitute an N-acetyltransferase domain. Residues 461–464 (QLHV), 485–487 (YGR), and tyrosine 518 contribute to the acetyl-CoA site.

It belongs to the ELP3 family. The cofactor is [4Fe-4S] cluster.

It catalyses the reaction uridine(34) in tRNA + acetyl-CoA + S-adenosyl-L-methionine + H2O = 5-(carboxymethyl)uridine(34) in tRNA + 5'-deoxyadenosine + L-methionine + CoA + 2 H(+). It functions in the pathway tRNA modification. Its function is as follows. tRNA uridine(34) acetyltransferase, which mediates formation of carboxymethyluridine in the wobble base at position 34 in tRNAs. The proposed mechanism is the following: (i) recruits S-adenosyl-L-methionine and cleaves it to generate a 5'-deoxyadenosine radical (5'-dA) in the radical S-adenosyl-L-methionine (rSAM) region, (ii) hydrolyzes acetyl-CoA in the N-acetyltransferase domain and (iii) an acetyl radical is formed by the products of the two domains and (iv) is transferred onto the C5 position of uridine(34) in the bound tRNA molecule. Does not show protein lysine acetyltransferase activity. This chain is tRNA uridine(34) acetyltransferase, found in Methanocaldococcus infernus (strain DSM 11812 / JCM 15783 / ME).